The primary structure comprises 438 residues: V-type ATP synthase beta chain (438 aa).

This sequence belongs to the ATPase alpha/beta chains family.

Its function is as follows. Produces ATP from ADP in the presence of a proton gradient across the membrane. The V-type beta chain is a regulatory subunit. In Chlamydia trachomatis serovar L2b (strain UCH-1/proctitis), this protein is V-type ATP synthase beta chain.